The primary structure comprises 187 residues: Cell division protein SepF (187 aa).

The tract at residues 13 to 74 (GLAEDDRYAE…PAPATTAQVT (62 aa)) is disordered. Residues 16 to 65 (EDDRYAEDTEPETTRPRVEAAREVRVESRHEARPEVRHEPRPEVSVERRP) are compositionally biased toward basic and acidic residues.

It belongs to the SepF family. As to quaternary structure, homodimer. Interacts with FtsZ.

Its subcellular location is the cytoplasm. Its function is as follows. Cell division protein that is part of the divisome complex and is recruited early to the Z-ring. Probably stimulates Z-ring formation, perhaps through the cross-linking of FtsZ protofilaments. Its function overlaps with FtsA. The polypeptide is Cell division protein SepF (Kineococcus radiotolerans (strain ATCC BAA-149 / DSM 14245 / SRS30216)).